A 701-amino-acid chain; its full sequence is MKPSLESDEEEELGALQKTLRERANRSIQHLSSMLAGHSSDSETSEPNQQELLSSVQQNPCSPVQQSEAVSQLRSLLQMKTKDANIQSLSPSRRKLAAKRATDDGSSSQPGVHNLVPIINNQSEYIQHLEAEVKFCKEELLEMKQRVRVVIVENEKLHHELKAKTIEDTLKEYTFVDSTLNMEHTAENTLKERLGSVNQAEDHKWRKEMEQLKCLYQAQTETLEAQVVSLKKDLACIQKEYEESKERLRHKEAMAVAAGTGQRVSGLCLKCAQHEAVLAETHTNVHVQSIERLTKERDELMTVLCSLRASQTDAQQREWGAYQQVKQAVEMAEEANLEKTRALVQCEHFHNELTRQRERLERELASEQDKISQAREAARSESKKEREELMQTLSSLSQKVAELQGLLDRGERDRNSLNSQLEEAYKKLTVQETDSSKMCAELRFLLSQAQLKKEEAERDVRDISSKLGRQLELAEQEVQKLGVELSGYRQRLEEAQRAEGRARAEAAGLAEGLSRAQRQLHLTRQEKEASERCCGEDMAALTFQAQRRERELTQTLQQMEAQHEKSVRETDALLSAQNSLIRKLKEECHTLGAKLEELAQSSRAEMEQLSLEREHLQESAEKLRGRCEEMEEQCVQHGRMHQRMKQRLQQLDQHCQASSQQVLQLLSRQKQLMQERQQLTEDLHSLKSQVHAGKRMDRLAV.

Residues 1–13 (MKPSLESDEEEEL) are compositionally biased toward acidic residues. Disordered stretches follow at residues 1-67 (MKPS…VQQS) and 84-114 (ANIQSLSPSRRKLAAKRATDDGSSSQPGVHN). Over residues 45–67 (SEPNQQELLSSVQQNPCSPVQQS) the composition is skewed to polar residues. 3 coiled-coil regions span residues 119–173 (INNQ…LKEY), 203–258 (HKWR…AVAA), and 323–695 (QQVK…AGKR). A disordered region spans residues 364 to 387 (LASEQDKISQAREAARSESKKERE).

The protein resides in the cytoplasm. The protein localises to the cytoskeleton. It is found in the microtubule organizing center. It localises to the centrosome. Its subcellular location is the centriole. The protein resides in the cilium basal body. The protein localises to the cell junction. Its function is as follows. Plays a role in the establishment of cell polarity and epithelial lumen formation. Also plays an essential role in ciliogenesis and subsequent Hedgehog signaling pathway that requires the presence of intact primary cilia for pathway activation. Mechanistically, interacts with and mediates RABEP2 centrosomal localization which is critical for ciliogenesis. The chain is Serologically defined colon cancer antigen 8 homolog (Sdccag8) from Danio rerio (Zebrafish).